A 374-amino-acid polypeptide reads, in one-letter code: Flap endonuclease 1 (374 aa).

Positions 1-105 (MGVKGLNKLI…GELEKRLLRR (105 aa)) are N-domain. Mg(2+) is bound at residue D34. R47 and R71 together coordinate DNA. Mg(2+)-binding residues include D87, E159, E161, D180, and D182. An I-domain region spans residues 123–254 (DHLKFEKRLV…VTAYKLIKEH (132 aa)). A DNA-binding site is contributed by E159. Positions 232 and 234 each coordinate DNA. A Mg(2+)-binding site is contributed by D234. The interval 339-347 (VQGRLDSFF) is interaction with PCNA. Residues 353–374 (DDGKDKKRKSTAKDTKSKKQKK) are disordered.

It belongs to the XPG/RAD2 endonuclease family. FEN1 subfamily. As to quaternary structure, interacts with PCNA. Three molecules of RAD27 bind to one PCNA trimer with each molecule binding to one PCNA monomer. PCNA stimulates the nuclease activity without altering cleavage specificity. Mg(2+) is required as a cofactor. Post-translationally, phosphorylated. Phosphorylation upon DNA damage induces relocalization to the nuclear plasma.

The protein localises to the nucleus. The protein resides in the nucleolus. Its subcellular location is the nucleoplasm. It is found in the mitochondrion. Structure-specific nuclease with 5'-flap endonuclease and 5'-3' exonuclease activities involved in DNA replication and repair. During DNA replication, cleaves the 5'-overhanging flap structure that is generated by displacement synthesis when DNA polymerase encounters the 5'-end of a downstream Okazaki fragment. It enters the flap from the 5'-end and then tracks to cleave the flap base, leaving a nick for ligation. Also involved in the long patch base excision repair (LP-BER) pathway, by cleaving within the apurinic/apyrimidinic (AP) site-terminated flap. Acts as a genome stabilization factor that prevents flaps from equilibrating into structures that lead to duplications and deletions. Also possesses 5'-3' exonuclease activity on nicked or gapped double-stranded DNA, and exhibits RNase H activity. Also involved in replication and repair of rDNA and in repairing mitochondrial DNA. In Candida tropicalis (strain ATCC MYA-3404 / T1) (Yeast), this protein is Flap endonuclease 1.